Here is a 515-residue protein sequence, read N- to C-terminus: 1-pyrroline-5-carboxylate dehydrogenase (515 aa).

Catalysis depends on residues Glu286 and Cys320.

The protein belongs to the aldehyde dehydrogenase family. RocA subfamily.

It carries out the reaction L-glutamate 5-semialdehyde + NAD(+) + H2O = L-glutamate + NADH + 2 H(+). The protein operates within amino-acid degradation; L-proline degradation into L-glutamate; L-glutamate from L-proline: step 2/2. This is 1-pyrroline-5-carboxylate dehydrogenase from Bacillus cereus (strain B4264).